We begin with the raw amino-acid sequence, 627 residues long: Sodium- and chloride-dependent GABA transporter 3 (627 aa).

The disordered stretch occupies residues 1 to 36; it reads MTAEQALPLGNGKAAEEARGSEALGGGGGGAAGTRE. At 1–53 the chain is on the cytoplasmic side; it reads MTAEQALPLGNGKAAEEARGSEALGGGGGGAAGTREARDKAVHERGHWNNKVE. At Ser-21 the chain carries Phosphoserine. Residues 23-32 show a composition bias toward gly residues; it reads ALGGGGGGAA. 3 consecutive transmembrane segments (helical) span residues 54 to 74, 82 to 101, and 126 to 146; these read FVLS…FPYL, AFLI…VFFL, and GIGY…IIIL. Topologically, residues 147 to 220 are extracellular; that stretch reads AWAIFYLSNC…DGIEHIGNLR (74 aa). N-linked (GlcNAc...) asparagine glycosylation is found at Asn-182, Asn-185, and Asn-193. 9 consecutive transmembrane segments (helical) span residues 221–239, 248–265, 301–318, 330–351, 384–403, 433–451, 468–488, 509–528, and 548–566; these read WELA…FCIW, VVYV…ILLI, IFFS…LGSY, IMLC…FSVL, MPLS…FLGL, LLIL…VMLT, GMCL…VYGS, WCWK…FFLV, and IGWL…WIFI. At 567-627 the chain is on the cytoplasmic side; sequence KLWKTEGTLP…SAITEKETHF (61 aa).

Belongs to the sodium:neurotransmitter symporter (SNF) (TC 2.A.22) family. SLC6A11 subfamily. As to expression, brain and retina. Expressed predominantly within neurons. Expressed in the hippocampus (at protein level).

The protein resides in the cell membrane. It catalyses the reaction 4-aminobutanoate(out) + chloride(out) + 2 Na(+)(out) = 4-aminobutanoate(in) + chloride(in) + 2 Na(+)(in). The catalysed reaction is taurine(out) + chloride(out) + 2 Na(+)(out) = taurine(in) + chloride(in) + 2 Na(+)(in). The enzyme catalyses beta-alanine(out) + chloride(out) + 2 Na(+)(out) = beta-alanine(in) + chloride(in) + 2 Na(+)(in). It carries out the reaction hypotaurine(out) + chloride(out) + 2 Na(+)(out) = hypotaurine(in) + chloride(in) + 2 Na(+)(in). GABA transport is inhibited by beta-alanine. Its function is as follows. Mediates sodium- and chloride-dependent transport of gamma-aminobutyric acid (GABA). Can also mediate transport of beta-alanine and to a lower extent that of taurine and hypotaurine. This Rattus norvegicus (Rat) protein is Sodium- and chloride-dependent GABA transporter 3 (Slc6a11).